The chain runs to 427 residues: TNF receptor-associated factor family protein DDB_G0285149 (427 aa).

The RING-type zinc finger occupies 20-65; that stretch reads CIVCTDLLSESHDKIQVNQCPHGHCLCSDCWTKQIENKKKECPICR. TRAF-type zinc fingers lie at residues 122–178 and 178–234; these read THFK…INKD and DHLE…KHQA. One can recognise an MATH domain in the interval 284–415; sequence KYSNQWVIEN…GNKLTIKFEI (132 aa).

This sequence belongs to the TNF receptor-associated factor family. A subfamily.

The protein localises to the cytoplasm. Functionally, probable adapter protein and signal transducer that links members of the tumor necrosis factor receptor family to different signaling pathways by association with the receptor cytoplasmic domain and kinases. The protein is TNF receptor-associated factor family protein DDB_G0285149 of Dictyostelium discoideum (Social amoeba).